Consider the following 677-residue polypeptide: Methionine--tRNA ligase (677 aa).

Positions 15–25 (PYANGSIHLGH) match the 'HIGH' region motif. Residues Cys146, Cys149, Cys159, and Cys162 each contribute to the Zn(2+) site. The short motif at 333 to 337 (KMSKS) is the 'KMSKS' region element. Lys336 lines the ATP pocket. The tRNA-binding domain occupies 575–677 (DFAKVDLRVA…AGAKPGHQVK (103 aa)).

It belongs to the class-I aminoacyl-tRNA synthetase family. MetG type 1 subfamily. In terms of assembly, homodimer. The cofactor is Zn(2+).

The protein localises to the cytoplasm. The enzyme catalyses tRNA(Met) + L-methionine + ATP = L-methionyl-tRNA(Met) + AMP + diphosphate. In terms of biological role, is required not only for elongation of protein synthesis but also for the initiation of all mRNA translation through initiator tRNA(fMet) aminoacylation. The sequence is that of Methionine--tRNA ligase from Escherichia coli (strain UTI89 / UPEC).